Reading from the N-terminus, the 415-residue chain is MSTAVTNWAGNITYTAKEVHRPATAEELADVVARSAWGACAGAAGHSFNEIADPGPDGVLLRLDALPAETDVDTTARTVRVGGGVRYAELARVVHAHGLALPNMASLPHISVAGSVATGTHGSGVTNGPLAAPVREVELVTADGSQVRIAPGERRFGGAVTSLGALGVVTALTLDLEPAFEVGQHLFTELPLRGLDFETVAAAGYSVSLFTDWREPGFRQVWLKRRTDQELPDFPWARPATVALHPVPGMPAENCTQQFGVPGPWHERLPHFRAEFTPSSGAELQSEYLLPRAHALDALDAVDRIRDTVAPVLQTCEVRTVAPDEQWLGPSHGRDTVALHFTWVKDTEAVLPVVRRLEEALDAFDPRPHWGKVFTTSAAALRARYPRLADFRALARELDPSGKFTNTFLRDLLDG.

Residues 12-179 (ITYTAKEVHR…TALTLDLEPA (168 aa)) enclose the FAD-binding PCMH-type domain. Residue H46 is modified to Pros-8alpha-FAD histidine. FAD-binding positions include S106, S111, G114, 118–121 (TGTH), and V169. S106 provides a ligand contact to xylitol. Residues E317, R319, and T342 each contribute to the xylitol site. R319 is a binding site for FAD. H369 is an FAD binding site. A xylitol-binding site is contributed by K372.

The protein belongs to the oxygen-dependent FAD-linked oxidoreductase family. In terms of assembly, monomer. FAD serves as cofactor.

It carries out the reaction an alditol + O2 = an aldose + H2O2. The enzyme catalyses xylitol + O2 = D-xylose + H2O2. The catalysed reaction is D-sorbitol + O2 = D-glucose + H2O2. Its function is as follows. Oxidase that performs selective oxidation of the terminal primary hydroxyl group of several alditols, with a reduction of O2 to H2O2. Shows highest activity on xylitol and D-sorbitol, and to a lesser extent, can also use galactitol, D-mannitol, and D-arabitol as substrates in vitro. Is not active on D-glucose, D-xylose, D-galactose, D-mannose, D-fructose, L-sorbose, L-fucose, myoinositol, glycerol, ethyl alcohol, and meso-erythritol. This is Alditol oxidase from Streptomyces sp. (strain IKD472 / FERM P-14339).